The sequence spans 114 residues: DNA-directed RNA polymerase subunit omega (114 aa).

Belongs to the RNA polymerase subunit omega family. The RNAP catalytic core consists of 2 alpha, 1 beta, 1 beta' and 1 omega subunit. When a sigma factor is associated with the core the holoenzyme is formed, which can initiate transcription.

The catalysed reaction is RNA(n) + a ribonucleoside 5'-triphosphate = RNA(n+1) + diphosphate. Its function is as follows. Promotes RNA polymerase assembly. Latches the N- and C-terminal regions of the beta' subunit thereby facilitating its interaction with the beta and alpha subunits. The polypeptide is DNA-directed RNA polymerase subunit omega (Erythrobacter litoralis (strain HTCC2594)).